The sequence spans 675 residues: Myosin-binding protein 3 (675 aa).

Residues 17–37 (ITVILVYAFLEWLLMFFIFLN) traverse the membrane as a helical segment. 2 disordered regions span residues 225–274 (LRSI…EEET) and 286–315 (SKNFTGSQIEEEEEDREETTKELDPETPTS). Over residues 238 to 251 (AKSRVSEDEQRNDD) the composition is skewed to basic and acidic residues. In terms of domain architecture, GTD-binding spans 355 to 453 (RTIERLRETV…QLQRELEVYR (99 aa)). Residues 474–496 (CEADDDDKEEENREEDNSSEMDV) are compositionally biased toward acidic residues. Disordered regions lie at residues 474-497 (CEADDDDKEEENREEDNSSEMDVD), 542-565 (DKESAEDPGEFSNSYEEASNGHGG), and 582-605 (AENESEDGSQGLPESDEKNFGSDS). Over residues 596-605 (SDEKNFGSDS) the composition is skewed to basic and acidic residues. A coiled-coil region spans residues 605 to 633 (SEKLEIIKQVDSVYERLQELETDGEFLKN).

Interacts with myosin XI-K.

The protein localises to the membrane. In terms of biological role, membrane-anchored myosin receptors that define a distinct, plant-specific transport vesicle compartment. This chain is Myosin-binding protein 3, found in Arabidopsis thaliana (Mouse-ear cress).